The primary structure comprises 131 residues: MTDCDLCGKGIPTVIPVRTYPPLLRFAYPEGVWKGLCETCLDSAQKTYLEVNRNHTSCRRGKCSLCGSKTGVFSVELQIPDFSKGIVRKDVDVCYRCLKLVDEAYIRYKREQIEQDHEQGRIHGHEHVHPH.

[2Fe-2S] cluster-binding residues include cysteine 58, cysteine 63, and cysteine 66.

This sequence belongs to the FpoO family. As to quaternary structure, the FPO complex is composed of at least 13 different subunits. The cofactor is [2Fe-2S] cluster.

It carries out the reaction methanophenazine + reduced coenzyme F420-(gamma-L-Glu)(n) = dihydromethanophenazine + oxidized coenzyme F420-(gamma-L-Glu)(n) + H(+). Component of the F(420)H(2) dehydrogenase (FPO complex) which is part of the energy-conserving F(420)H(2):heterodisulfide oxidoreductase system. The membrane-bound electron transfer system of the complex plays an important role in the metabolism of methylotrophic methanogens when the organisms grow on methanol or methylamines. Catalyzes the oxidation of methanophenazine to dihydromethanophenazine. It shuttles electrons from F(420)H(2), via FAD and iron-sulfur (Fe-S) centers, to methanophenazine (an electron carrier in the membrane). It couples the redox reaction to proton translocation (for every two electrons transferred, two hydrogen ions are translocated across the cytoplasmic membrane), and thus conserves the redox energy in a proton gradient. It also catalyzes the oxidation of F(420)H(2) with quinones such as 2,3-dimethyl-1,4-naphthoquinone, 2-methyl-1,4-naphthoquinone and tetramethyl-p-benzoquinone. In Methanosarcina mazei (strain ATCC BAA-159 / DSM 3647 / Goe1 / Go1 / JCM 11833 / OCM 88) (Methanosarcina frisia), this protein is F(420)H(2) dehydrogenase subunit O (fpoO).